We begin with the raw amino-acid sequence, 422 residues long: Dioxygenase str8 (422 aa).

Cysteine 73, cysteine 75, cysteine 78, and histidine 119 together coordinate Zn(2+). Fe cation is bound by residues histidine 243, aspartate 245, and histidine 382.

This sequence belongs to the gamma-BBH/TMLD family. Fe(2+) serves as cofactor.

The protein operates within mycotoxin biosynthesis. Dioxygenase; part of the gene cluster that mediates the biosynthesis of strobilurin A, an antifungal polyketide that contains a key beta-methoxyacrylate toxophore that targets the complex III of the mitochondrial electron transport chain. Strobilurin biosynthesis begins with construction of benzoyl CoA by step-wise elimination of ammonia from phenylalanine by the phenylalanine ammonia-lyase str11, oxygenation by str8 and retro-Claisen reaction to form benzoic acid, which is activated to its CoA thiolester benzoyl CoA by the dedicated CoA ligase str10. Benzoyl CoA forms the starter unit for the highly reducing polyketide synthase stpks1 that produces the polyketide prestrobilutin A. The FAD-dependent oxygenase str9 then catalyzes the key oxidative rearrangement responsible for the creation of the beta-methoxyacrylate toxophore. Str9 performs epoxidation of the 2,3 olefin of prestrobilutin A, followed by Meinwald rearrangement to furnish the aldehyde intermediate. Rapid enolization of the aldehyde intermediate would give the beta-methoxyacrylate skeleton and methylations catalyzed by str2 and str3 complete the synthesis and lead to the production of strobilurin A. The short-chain dehydrogenase stl2 and the dehydrogenase str4 play a role in the shunt pathway leading to the production of bolineol. The cluster encodes no obvious halogenase gene that could be involved in production of strobilurin B, nor any obvious dimethylallyl-transferase that could be involved in the production of strobilurin G. It is possible that unknown proteins encoded in, or near, the cluster (such as str1 or stl1) may form new classes of halogenases or dimethylally-transferases, or that the responsible genes are located elsewhere on the genome. Similarly, proteins encoded by str5/str6 hydrolases appear to have no chemical role in the biosynthesis of strobilurin A. Finally, no obvious self-resistance gene is found within the cluster. The protein is Dioxygenase str8 of Strobilurus tenacellus.